The chain runs to 363 residues: Protein RecA (363 aa).

Residue 77 to 84 (GPESSGKT) participates in ATP binding.

Belongs to the RecA family.

The protein localises to the cytoplasm. Its function is as follows. Can catalyze the hydrolysis of ATP in the presence of single-stranded DNA, the ATP-dependent uptake of single-stranded DNA by duplex DNA, and the ATP-dependent hybridization of homologous single-stranded DNAs. It interacts with LexA causing its activation and leading to its autocatalytic cleavage. The polypeptide is Protein RecA (Agrobacterium fabrum (strain C58 / ATCC 33970) (Agrobacterium tumefaciens (strain C58))).